We begin with the raw amino-acid sequence, 328 residues long: P2Y purinoceptor 6 (328 aa).

Over 1-27 (MERDNGTIQAPGLPPTTCVYREDFKRL) the chain is Extracellular. N5 is a glycosylation site (N-linked (GlcNAc...) asparagine). A helical membrane pass occupies residues 28–48 (LLPPVYSVVLVVGLPLNVCVI). Residues 49 to 62 (AQICASRRTLTRSA) lie on the Cytoplasmic side of the membrane. A helical transmembrane segment spans residues 63-83 (VYTLNLALADLLYACSLPLLI). Residues 84–101 (YNYARGDHWPFGDLACRL) lie on the Extracellular side of the membrane. The cysteines at positions 99 and 177 are disulfide-linked. Residues 102 to 122 (VRFLFYANLHGSILFLTCISF) form a helical membrane-spanning segment. Over 123 to 144 (QRYLGICHPLAPWHKRGGRRAA) the chain is Cytoplasmic. A helical transmembrane segment spans residues 145–165 (WVVCGVVWLVVTAQCLPTAVF). At 166–194 (AATGIQRNRTVCYDLSPPILSTRYLPYGM) the chain is on the extracellular side. N173 carries N-linked (GlcNAc...) asparagine glycosylation. A helical transmembrane segment spans residues 195 to 215 (ALTVIGFLLPFTALLACYCRM). Over 216 to 236 (ARRLCRQDGPAGPVAQERRSK) the chain is Cytoplasmic. The helical transmembrane segment at 237–257 (AARMAVVVAAVFVISFLPFHI) threads the bilayer. Over 258–280 (TKTAYLAVRSTPGVSCPVLETFA) the chain is Extracellular. A helical transmembrane segment spans residues 281 to 303 (AAYKGTRPFASANSVLDPILFYF). The Cytoplasmic segment spans residues 304 to 328 (TQQKFRRQPHDLLQKLTAKWQRQRV).

Belongs to the G-protein coupled receptor 1 family. In terms of tissue distribution, abundantly expressed in various tissues including lung, stomach, intestine, spleen, mesentery, heart, and, most prominently, aorta.

The protein localises to the cell membrane. Its function is as follows. Receptor for extracellular UTP &gt; ADP = 2-methylthio-ATP &gt; ADP-beta-S &gt; ATP = ATP-gamma-S. The activity of this receptor is mediated by G proteins which activate a phosphatidylinositol-calcium second messenger system. Functionally coupled to phospholipase C. In Rattus norvegicus (Rat), this protein is P2Y purinoceptor 6 (P2ry6).